We begin with the raw amino-acid sequence, 242 residues long: Argininosuccinate synthase (242 aa).

The protein belongs to the argininosuccinate synthase family. Type 2 subfamily. As to quaternary structure, homotetramer.

The protein resides in the cytoplasm. The enzyme catalyses L-citrulline + L-aspartate + ATP = 2-(N(omega)-L-arginino)succinate + AMP + diphosphate + H(+). The protein operates within amino-acid biosynthesis; L-arginine biosynthesis; L-arginine from L-ornithine and carbamoyl phosphate: step 2/3. The protein is Argininosuccinate synthase (argG) of Dickeya chrysanthemi (Pectobacterium chrysanthemi).